The sequence spans 156 residues: Protein Smg homolog (156 aa).

It belongs to the Smg family.

This is Protein Smg homolog from Halorhodospira halophila (strain DSM 244 / SL1) (Ectothiorhodospira halophila (strain DSM 244 / SL1)).